The primary structure comprises 669 residues: Cell surface receptor daf-1 (669 aa).

The first 19 residues, 1 to 19, serve as a signal peptide directing secretion; sequence MRIRHVVFCLLALVYGAET. The Extracellular segment spans residues 20 to 170; it reads SDDDLDERTN…APGPQQSSTW (151 aa). N-linked (GlcNAc...) asparagine glycosylation is found at Asn49, Asn79, Asn133, and Asn154. Residues 171 to 191 form a helical membrane-spanning segment; sequence LILTILALLTFIVLLGIAIFL. The Cytoplasmic segment spans residues 192–669; the sequence is TRKSWEAKFD…NDDSSRPLLG (478 aa). In terms of domain architecture, GS spans 262–292; sequence NNMKDMLDVLEETSGSGMGPTTLHKLTIGGQ. Residues 293-593 form the Protein kinase domain; the sequence is IRLTGRVGSG…KRMDERQQLL (301 aa). ATP-binding positions include 299-307 and Lys320; that span reads VGSGRFGNV. Residue Asp423 is the Proton acceptor of the active site. 2 stretches are compositionally biased toward basic and acidic residues: residues 611–624 and 633–650; these read DRKILGPQKPKDES and VQKEIDREDEQENWRETA. Positions 611–669 are disordered; the sequence is DRKILGPQKPKDESPANGAPRIVQKEIDREDEQENWRETAKTPNGHISSNDDSSRPLLG. The span at 651–661 shows a compositional bias: polar residues; sequence KTPNGHISSND.

The protein belongs to the protein kinase superfamily. TKL Ser/Thr protein kinase family. TGFB receptor subfamily. In terms of assembly, may interact with daf-4 to regulate dauer larva development. Head and ventral nerve cord from embryos to adults. Expressed in many sensory neurons. Subset of head neurons show coexpression with daf-4 when dauer/nondauer decision is made. Also expressed in non-neuronal cells: membraneous sheath surrounding the distal end of the intestine and in the distal tip cell of the gonad.

The protein resides in the membrane. The catalysed reaction is L-threonyl-[receptor-protein] + ATP = O-phospho-L-threonyl-[receptor-protein] + ADP + H(+). It carries out the reaction L-seryl-[receptor-protein] + ATP = O-phospho-L-seryl-[receptor-protein] + ADP + H(+). Probably involved in a TGF-beta pathway. May be a receptor for TGF-beta-like ligand daf-7. Controls the decision of whether or not larvae enter a developmentally arrested state, known as dauer, in response to environmental conditions. Involved in regulating entry into quiescence triggered by satiety. Involved in sensitivity to CO2 levels. In AWC neurons, acts to promote expression of srsx-3, a member of the GPCR family. This is Cell surface receptor daf-1 (daf-1) from Caenorhabditis elegans.